Here is a 376-residue protein sequence, read N- to C-terminus: 4-hydroxy-3-methylbut-2-en-1-yl diphosphate synthase (flavodoxin) (376 aa).

Positions 272, 275, 307, and 314 each coordinate [4Fe-4S] cluster.

It belongs to the IspG family. It depends on [4Fe-4S] cluster as a cofactor.

The catalysed reaction is (2E)-4-hydroxy-3-methylbut-2-enyl diphosphate + oxidized [flavodoxin] + H2O + 2 H(+) = 2-C-methyl-D-erythritol 2,4-cyclic diphosphate + reduced [flavodoxin]. It participates in isoprenoid biosynthesis; isopentenyl diphosphate biosynthesis via DXP pathway; isopentenyl diphosphate from 1-deoxy-D-xylulose 5-phosphate: step 5/6. Its function is as follows. Converts 2C-methyl-D-erythritol 2,4-cyclodiphosphate (ME-2,4cPP) into 1-hydroxy-2-methyl-2-(E)-butenyl 4-diphosphate. The polypeptide is 4-hydroxy-3-methylbut-2-en-1-yl diphosphate synthase (flavodoxin) (Blochmanniella pennsylvanica (strain BPEN)).